We begin with the raw amino-acid sequence, 204 residues long: Large ribosomal subunit protein uL4 (204 aa).

Residues 49-75 are disordered; it reads TKGRSDVSGGGKKPWRQKGRGGARAGS.

Belongs to the universal ribosomal protein uL4 family. In terms of assembly, part of the 50S ribosomal subunit.

In terms of biological role, one of the primary rRNA binding proteins, this protein initially binds near the 5'-end of the 23S rRNA. It is important during the early stages of 50S assembly. It makes multiple contacts with different domains of the 23S rRNA in the assembled 50S subunit and ribosome. Its function is as follows. Forms part of the polypeptide exit tunnel. This Campylobacter lari (strain RM2100 / D67 / ATCC BAA-1060) protein is Large ribosomal subunit protein uL4.